The primary structure comprises 369 residues: Actin-related protein T3 (369 aa).

This sequence belongs to the actin family. As to quaternary structure, interacts with PFN3. As to expression, testis specific (at protein level). Expressed specifically in haploid germ cells.

Its subcellular location is the cytoplasm. The protein resides in the cytoskeleton. It localises to the nucleus. The protein is Actin-related protein T3 (Actrt3) of Mus musculus (Mouse).